Here is a 103-residue protein sequence, read N- to C-terminus: MSFKQLLYNLPTHLCCGLIHLYRWTISPLLGSPCRFFPSCSQYALQALKHHKCIRGLWLTIKRIGKCGPWHPGGIDLVPMTTLEEALDVSQVTNDDDSGDSHA.

The protein belongs to the UPF0161 family.

The protein resides in the cell inner membrane. Functionally, could be involved in insertion of integral membrane proteins into the membrane. This Chlamydia abortus (strain DSM 27085 / S26/3) (Chlamydophila abortus) protein is Putative membrane protein insertion efficiency factor.